The following is an 80-amino-acid chain: Exodeoxyribonuclease 7 small subunit (80 aa).

Belongs to the XseB family. In terms of assembly, heterooligomer composed of large and small subunits.

The protein localises to the cytoplasm. It carries out the reaction Exonucleolytic cleavage in either 5'- to 3'- or 3'- to 5'-direction to yield nucleoside 5'-phosphates.. In terms of biological role, bidirectionally degrades single-stranded DNA into large acid-insoluble oligonucleotides, which are then degraded further into small acid-soluble oligonucleotides. In Klebsiella pneumoniae (strain 342), this protein is Exodeoxyribonuclease 7 small subunit.